A 184-amino-acid polypeptide reads, in one-letter code: Small ribosomal subunit protein uS4 (184 aa).

The 65-residue stretch at 108 to 172 folds into the S4 RNA-binding domain; the sequence is RRLQTQVHRL…SPMTKESHPE (65 aa). The tract at residues 163 to 184 is disordered; that stretch reads SPMTKESHPERPAQIAASVVEE.

The protein belongs to the universal ribosomal protein uS4 family. In terms of assembly, part of the 30S ribosomal subunit. Contacts protein S5. The interaction surface between S4 and S5 is involved in control of translational fidelity.

One of the primary rRNA binding proteins, it binds directly to 16S rRNA where it nucleates assembly of the body of the 30S subunit. In terms of biological role, with S5 and S12 plays an important role in translational accuracy. In Methanococcoides burtonii (strain DSM 6242 / NBRC 107633 / OCM 468 / ACE-M), this protein is Small ribosomal subunit protein uS4.